The chain runs to 293 residues: MAAVQRLLRASASGGAAAAAAAARRRMSTAVAPEQTPAAAAFPFAAAAGRARQRVAEERNVQWVFLGCPGVGKGTYASRLSRLLGVPHIATGDLVRDELASSGPLSVQLAEIVNQGKLVSDEIIINLLSKRLKKGEEQGESGFILDGFPRTVKQAEILDGVTDIDMVVNLKLREDVLVEKCLGRRICGQCGKNFNLACIDVKGENGLPPIYMAPLLPPNNCMSKLITRADDTEEVVRNRLQIYNDMSQPVEGFYRQQGKLLEFDLPGGIPESWPKLLHVLNLEDQEEMKLATA.

The N-terminal 26 residues, 1-26 (MAAVQRLLRASASGGAAAAAAAARRR), are a transit peptide targeting the mitochondrion. Residue 70 to 75 (GVGKGT) participates in ATP binding. Residues 90-119 (ATGDLVRDELASSGPLSVQLAEIVNQGKLV) form an NMP region. AMP contacts are provided by residues Thr91, Arg96, 117–119 (KLV), 147–150 (GFPR), and Gln154. The interval 183 to 231 (GRRICGQCGKNFNLACIDVKGENGLPPIYMAPLLPPNNCMSKLITRADD) is LID. ATP contacts are provided by residues Arg184 and 193–194 (NF). AMP contacts are provided by Arg228 and Arg239.

Belongs to the adenylate kinase family.

Its subcellular location is the mitochondrion. It carries out the reaction AMP + ATP = 2 ADP. Functionally, catalyzes the reversible transfer of the terminal phosphate group between ATP and AMP. Plays an important role in cellular energy homeostasis and in adenine nucleotide metabolism. The polypeptide is Probable adenylate kinase 1, chloroplastic (Oryza sativa subsp. japonica (Rice)).